Here is a 506-residue protein sequence, read N- to C-terminus: Probable Xaa-Pro aminopeptidase PAAG_05466 (506 aa).

Mn(2+)-binding residues include D285, D296, E433, and E471.

This sequence belongs to the peptidase M24B family. Mn(2+) is required as a cofactor.

It carries out the reaction Release of any N-terminal amino acid, including proline, that is linked to proline, even from a dipeptide or tripeptide.. Its function is as follows. Catalyzes the removal of a penultimate prolyl residue from the N-termini of peptides. This chain is Probable Xaa-Pro aminopeptidase PAAG_05466, found in Paracoccidioides lutzii (strain ATCC MYA-826 / Pb01) (Paracoccidioides brasiliensis).